Reading from the N-terminus, the 63-residue chain is 2-hydroxymuconate tautomerase (63 aa).

The active-site Proton acceptor; via imino nitrogen is proline 2.

It belongs to the 4-oxalocrotonate tautomerase family. Homohexamer.

The catalysed reaction is (2Z,4E)-2-hydroxyhexa-2,4-dienedioate = (3E)-2-oxohex-3-enedioate. Its pathway is aromatic compound metabolism; salicylate degradation. Its function is as follows. Catalyzes the ketonization of 2-hydroxymuconate stereoselectively to yield 2-oxo-3-hexenedioate. This is 2-hydroxymuconate tautomerase (nahJ) from Stutzerimonas stutzeri (Pseudomonas stutzeri).